We begin with the raw amino-acid sequence, 156 residues long: Fibroblast growth factor 2 (156 aa).

The propeptide occupies 1–9; that stretch reads MAAGSITTL. A heparin-binding site is contributed by asparagine 37. At tyrosine 83 the chain carries Phosphotyrosine; by TEC. Residue lysine 96 forms a Glycyl lysine isopeptide (Lys-Gly) (interchain with G-Cter in SUMO1) linkage. Residues 129–145 are heparin-binding; that stretch reads KRTGQYKLGSKTGPGQK.

Belongs to the heparin-binding growth factors family. In terms of assembly, monomer. Homodimer. Interacts with FGFR1, FGFR2, FGFR3 and FGFR4. Affinity between fibroblast growth factors (FGFs) and their receptors is increased by heparan sulfate glycosaminoglycans that function as coreceptors. Interacts with CSPG4, FGFBP1 and TEC. Found in a complex with FGFBP1, FGF1 and FGF2. Interacts with FGFBP3. Interacts with integrin ITGAV:ITGB3; the interaction is required for FGF2 signaling. Interacts with SNORC (via the extracellular domain). Interacts with glypican GPC3. Phosphorylation at Tyr-83 regulates FGF2 unconventional secretion.

It localises to the secreted. Its subcellular location is the nucleus. Functionally, acts as a ligand for FGFR1, FGFR2, FGFR3 and FGFR4. Also acts as an integrin ligand which is required for FGF2 signaling. Binds to integrin ITGAV:ITGB3. Plays an important role in the regulation of cell survival, cell division, cell differentiation and cell migration. Functions as a potent mitogen in vitro. Can induce angiogenesis. Mediates phosphorylation of ERK1/2 and thereby promotes retinal lens fiber differentiation. The polypeptide is Fibroblast growth factor 2 (FGF2) (Monodelphis domestica (Gray short-tailed opossum)).